A 223-amino-acid polypeptide reads, in one-letter code: Deoxyribose-phosphate aldolase (223 aa).

Aspartate 89 functions as the Proton donor/acceptor in the catalytic mechanism. Lysine 152 (schiff-base intermediate with acetaldehyde) is an active-site residue. Lysine 181 (proton donor/acceptor) is an active-site residue.

This sequence belongs to the DeoC/FbaB aldolase family. DeoC type 1 subfamily.

The protein resides in the cytoplasm. It carries out the reaction 2-deoxy-D-ribose 5-phosphate = D-glyceraldehyde 3-phosphate + acetaldehyde. It participates in carbohydrate degradation; 2-deoxy-D-ribose 1-phosphate degradation; D-glyceraldehyde 3-phosphate and acetaldehyde from 2-deoxy-alpha-D-ribose 1-phosphate: step 2/2. Functionally, catalyzes a reversible aldol reaction between acetaldehyde and D-glyceraldehyde 3-phosphate to generate 2-deoxy-D-ribose 5-phosphate. The sequence is that of Deoxyribose-phosphate aldolase from Listeria monocytogenes serotype 4b (strain CLIP80459).